The chain runs to 600 residues: MGKKLDLSKLTDEEAQHVLEVVQRDFDLRRKEEERLEALKGKIKKESSKRELLSDTAHLNETHCARCLQPYQLLVNSKRQCLECGLFTCKSCGRVHPEEQGWICDPCHLARVVKIGSLEWYYEHVKARFKRFGSAKVIRSLHGRLQGGAGPELISEERSGDSDQTDEDGEPGSEAQAQAQPFGSKKKRLLSVHDFDFEGDSDDSTQPQGHSLHLSSVPEARDSPQSLTDESCSEKAAPHKAEGLEEADTGASGCHSHPEEQPTSISPSRHGALAELCPPGGSHRMALGTAAALGSNVIRNEQLPLQYLADVDTSDEESIRAHVMASHHSKRRGRASSESQIFELNKHISAVECLLTYLENTVVPPLAKGLGAGVRTEADVEEEALRRKLEELTSNVSDQETSSEEEEAKDEKAEPNRDKSVGPLPQADPEVGTAAHQTNRQEKSPQDPGDPVQYNRTTDEELSELEDRVAVTASEVQQAESEVSDIESRIAALRAAGLTVKPSGKPRRKSNLPIFLPRVAGKLGKRPEDPNADPSSEAKAMAVPYLLRRKFSNSLKSQGKDDDSFDRKSVYRGSLTQRNPNARKGMASHTFAKPVVAHQS.

The region spanning 4–124 is the RabBD domain; sequence KLDLSKLTDE…IGSLEWYYEH (121 aa). The FYVE-type zinc finger occupies 64–107; that stretch reads CARCLQPYQLLVNSKRQCLECGLFTCKSCGRVHPEEQGWICDPC. Disordered stretches follow at residues 146–277, 390–465, 499–541, and 553–600; these read QGGA…AELC, EELT…LSEL, TVKP…AKAM, and NSLK…AHQS. 2 stretches are compositionally biased toward basic and acidic residues: residues 232–243 and 409–420; these read CSEKAAPHKAEG and KDEKAEPNRDKS. The stretch at 373 to 496 forms a coiled coil; the sequence is GVRTEADVEE…ESRIAALRAA (124 aa). Residues 558 to 569 are compositionally biased toward basic and acidic residues; that stretch reads QGKDDDSFDRKS.

Binds RAB27A that has been activated by GTP-binding via its N-terminus. Binds MYO5A via its C-terminal coiled coil domain.

It is found in the cytoplasm. In terms of biological role, rab effector protein involved in melanosome transport. Serves as link between melanosome-bound RAB27A and the motor protein MYO5A. The polypeptide is Melanophilin (MLPH) (Homo sapiens (Human)).